A 745-amino-acid chain; its full sequence is NAD(P)H-quinone oxidoreductase subunit 5, chloroplastic (745 aa).

16 helical membrane-spanning segments follow: residues 9–29, 50–70, 99–119, 135–155, 157–177, 194–214, 229–249, 268–288, 290–310, 337–357, 364–384, 406–426, 435–455, 550–570, 610–630, and 724–744; these read WIIP…LLLF, WAFP…DLSI, IDSL…FVLI, FAYM…CNLI, IYIF…FWFT, IGDF…GSFE, NEVH…GAVA, TPIS…FLVA, LFPL…IGII, LGYM…FHLI, ALLF…VGYS, IAFL…CFWS, WLYS…TAFY, LFPM…AIPF, FSVS…KPFY, and FYLL…YFIL.

The protein belongs to the complex I subunit 5 family. In terms of assembly, NDH is composed of at least 16 different subunits, 5 of which are encoded in the nucleus.

It is found in the plastid. The protein resides in the chloroplast thylakoid membrane. It carries out the reaction a plastoquinone + NADH + (n+1) H(+)(in) = a plastoquinol + NAD(+) + n H(+)(out). The enzyme catalyses a plastoquinone + NADPH + (n+1) H(+)(in) = a plastoquinol + NADP(+) + n H(+)(out). Functionally, NDH shuttles electrons from NAD(P)H:plastoquinone, via FMN and iron-sulfur (Fe-S) centers, to quinones in the photosynthetic chain and possibly in a chloroplast respiratory chain. The immediate electron acceptor for the enzyme in this species is believed to be plastoquinone. Couples the redox reaction to proton translocation, and thus conserves the redox energy in a proton gradient. The protein is NAD(P)H-quinone oxidoreductase subunit 5, chloroplastic (ndhF) of Gossypium barbadense (Sea Island cotton).